An 811-amino-acid chain; its full sequence is Phenylalanine--tRNA ligase beta subunit (811 aa).

The tRNA-binding domain maps to 40 to 156 (AEKNENIVVG…EDIEVGSKVD (117 aa)). The B5 domain maps to 411-486 (KSTKEVKVPL…RIHGYDHLPY (76 aa)). Mg(2+) contacts are provided by aspartate 464, aspartate 470, glutamate 473, and glutamate 474. The region spanning 717–810 (PRYPSVSRDI…VNKKFGSYVR (94 aa)) is the FDX-ACB domain.

The protein belongs to the phenylalanyl-tRNA synthetase beta subunit family. Type 1 subfamily. As to quaternary structure, tetramer of two alpha and two beta subunits. Requires Mg(2+) as cofactor.

It localises to the cytoplasm. It catalyses the reaction tRNA(Phe) + L-phenylalanine + ATP = L-phenylalanyl-tRNA(Phe) + AMP + diphosphate + H(+). The polypeptide is Phenylalanine--tRNA ligase beta subunit (Oceanobacillus iheyensis (strain DSM 14371 / CIP 107618 / JCM 11309 / KCTC 3954 / HTE831)).